A 100-amino-acid chain; its full sequence is Small ribosomal subunit protein uS14c (100 aa).

The protein belongs to the universal ribosomal protein uS14 family. As to quaternary structure, part of the 30S ribosomal subunit.

The protein resides in the plastid. Its subcellular location is the chloroplast. In terms of biological role, binds 16S rRNA, required for the assembly of 30S particles. The polypeptide is Small ribosomal subunit protein uS14c (Staurastrum punctulatum (Green alga)).